We begin with the raw amino-acid sequence, 89 residues long: Small ribosomal subunit protein bS20 (89 aa).

A disordered region spans residues 1–28; it reads MANHYSALKRARQTETRTARNRANTSRM.

This sequence belongs to the bacterial ribosomal protein bS20 family.

Its function is as follows. Binds directly to 16S ribosomal RNA. The chain is Small ribosomal subunit protein bS20 from Koribacter versatilis (strain Ellin345).